The primary structure comprises 91 residues: UPF0728 protein v1g117062 (91 aa).

This sequence belongs to the UPF0728 family.

In Nematostella vectensis (Starlet sea anemone), this protein is UPF0728 protein v1g117062.